Consider the following 78-residue polypeptide: Omega-conotoxin-like 2 (78 aa).

The signal sequence occupies residues 1 to 22 (MKLTCVVIVAVLLLTACQLITA). A propeptide spanning residues 23 to 42 (DDSRGTQKHRSLRSTTKVSK) is cleaved from the precursor. 3 disulfides stabilise this stretch: cysteine 46–cysteine 62, cysteine 53–cysteine 65, and cysteine 61–cysteine 72.

The protein belongs to the conotoxin O1 superfamily. As to expression, expressed by the venom duct.

It localises to the secreted. Omega-conotoxins act at presynaptic membranes, they bind and block voltage-gated calcium channels (Cav). This Conus striatus (Striated cone) protein is Omega-conotoxin-like 2.